The chain runs to 145 residues: Aminoglycoside N(6')-acetyltransferase type 1 (145 aa).

Residues 1 to 145 (MNIKPASEAS…KVVYFSKKID (145 aa)) form the N-acetyltransferase domain. Positions 22, 65, and 78 each coordinate substrate. 80–82 (IYV) contributes to the acetyl-CoA binding site. Position 114 (Asp114) interacts with substrate. Residue Asn119 coordinates acetyl-CoA. Glu135 provides a ligand contact to substrate.

In terms of assembly, homodimer.

The catalysed reaction is kanamycin B + acetyl-CoA = N(6')-acetylkanamycin B + CoA + H(+). Its function is as follows. Catalyzes the transfer of an acetyl group from acetyl-CoA to the 6'-amino group of aminoglycoside molecules conferring resistance to antibiotics containing the purpurosamine ring including amikacin, kanamycin, tobramycin and netilmicin. This chain is Aminoglycoside N(6')-acetyltransferase type 1, found in Acinetobacter haemolyticus.